The chain runs to 213 residues: Non-structural protein NP-1 (213 aa).

Residues 1-80 are disordered; it reads MERSRSPRET…ATRKETATKK (80 aa). Composition is skewed to basic and acidic residues over residues 15-33 and 43-58; these read SRDK…ERTR and AHGE…REKN.

The protein belongs to the Bocaparvovirus Non-structural protein NP-1 family.

Its subcellular location is the host nucleus. Its function is as follows. Required for the expression of the capsid proteins. Performs the splicing and internal polyadenylation of the viral capsid-encoding mRNA precursor, which allows its maturation and expression. Transactivates the viral promoter. The chain is Non-structural protein NP-1 (NP1) from Bos taurus (Bovine).